A 627-amino-acid chain; its full sequence is MKGLRSKFVKALSLKDEQGSHKNGHSKSHYISKNGSYVETDDVKHTDTHHSSKHELKKLKSHFLKDTLKHKRNHHANSNNEKHENSDKKIHTTVLASGHEDSDYSTFLPVIETSKVKDANHFPPNYPEPKNDSVSSNIDEFPNDSISSASFLSVPQSTPPYLVSQPTPLNKFLAGAENVDIPHSLRPVPRREHSSQFQVSEKRTLVRLPSFDDVHTSEREELFIKKLEQCNIIFDFNDPSSDLASKEIKREALLQMIDYVSENRGISSASLFPYVVNTFSLNVFRPISPALNDYSSDMFALDDEPFLEPAWPHLEEVYLLFIKFLESPDFRASKAKSLVDRRFFNRLLALFDTEDPRERELLKTTLHRIYGKFLNLRSYIRKSMNNVFLQFIYEREKFHGIAELLEILGSIINGFAVPLKEEHKIFLSKVLIPLHQTKSVFLYHPQLTYCIVQFIDKDPSLTKAVLTGILKYWPRINSFKELLFLNEIEDIFEVLEPSEFVNIMSPLFQQLARSISSMHFQVAERALCLWSNEYFTSLVSQNVVTLLPIIYPSLYKTANEHWNSTIQAIACNVLQIFVDMDADFFNGLVEDYKQAIIKQEEVMIIRKQQWCQIEALAAENKPTDYLR.

The disordered stretch occupies residues 1 to 37 (MKGLRSKFVKALSLKDEQGSHKNGHSKSHYISKNGSY).

This sequence belongs to the phosphatase 2A regulatory subunit B family. In terms of assembly, PP2A consists of a common heterodimeric core enzyme, composed of a 36 kDa catalytic subunit (subunit C) and a 65 kDa constant regulatory subunit (PR65 or subunit A), that associates with a variety of regulatory subunits. Proteins that associate with the core dimer include three families of regulatory subunits B (the R2/B/PR55/B55, R3/B''/PR72/PR130/PR59 and R5/B'/B56 families), the 48 kDa variable regulatory subunit, viral proteins, and cell signaling molecules.

It localises to the cytoplasm. The protein localises to the cell tip. The B regulatory subunit might modulate substrate selectivity and catalytic activity, and might also direct the localization of the catalytic enzyme to a particular subcellular compartment. Has a role in cell shape control and septum formation. The polypeptide is Serine/threonine-protein phosphatase 2A 56 kDa regulatory subunit delta 2 isoform (par2) (Schizosaccharomyces pombe (strain 972 / ATCC 24843) (Fission yeast)).